Here is a 278-residue protein sequence, read N- to C-terminus: Manganese import system permease protein ScaB (278 aa).

Transmembrane regions (helical) follow at residues 18–38, 61–81, 94–114, 134–154, 174–194, 196–216, 222–242, and 246–266; these read ALITAIVIGVVAGAVGCFIIL, ILGINFFIGAITFGLLASIII, TAIGITFSSFLALGIILISVA, LDMWISIGVGILVLLVISIFF, VNFYHYLLMILLTLVSVTAMQ, VGTILIVAMLITPAATAYLYA, MILLSSALGAGASVLGLFIGY, and VAAGSSIVLTSALIFLVSFFI.

Belongs to the ABC-3 integral membrane protein family. In terms of assembly, the complex is composed of two ATP-binding proteins (ScaC), two transmembrane proteins (ScaB) and a solute-binding protein (ScaA).

Its subcellular location is the cell membrane. Part of the high-affinity ABC transporter complex ScaABC involved in manganese import. Probably responsible for the translocation of the substrate across the membrane. Essential for growth under Mn(2+)-limiting conditions. The protein is Manganese import system permease protein ScaB of Streptococcus gordonii.